Here is an 880-residue protein sequence, read N- to C-terminus: A-adding tRNA nucleotidyltransferase (880 aa).

CBS domains follow at residues 315 to 373 (MSSP…NLPV) and 377 to 435 (MHTE…RNAE). ATP is bound at residue 487 to 490 (GFVR). The Mg(2+) site is built by Asp-500 and Asp-502. ATP contacts are provided by residues 574 to 575 (RD), Asn-579, 619 to 628 (DPTRVFRAIR), Arg-632, and Arg-661.

Belongs to the tRNA nucleotidyltransferase/poly(A) polymerase family. Mg(2+) serves as cofactor.

The catalysed reaction is a tRNA with a 3' CC end + ATP = a tRNA with a 3' CCA end + diphosphate. Its function is as follows. tRNA nucleotidyltransferase involved in the synthesis of the tRNA CCA terminus. Adds the terminal adenosine residue to tRNA. The sequence is that of A-adding tRNA nucleotidyltransferase from Geobacter sulfurreducens (strain ATCC 51573 / DSM 12127 / PCA).